The chain runs to 812 residues: 5-methyltetrahydropteroyltriglutamate--homocysteine methyltransferase 3, chloroplastic (812 aa).

The transit peptide at 1–33 directs the protein to the chloroplast; the sequence is MGQLALQRLQPLASLPRRPPSLPPPSSATPSLP. Residues 13–33 are disordered; that stretch reads ASLPRRPPSLPPPSSATPSLP. Residues 17–27 are compositionally biased toward pro residues; it reads RRPPSLPPPSS. 2 residues coordinate 5-methyltetrahydropteroyltri-L-glutamate: Lys-66 and Asn-164. Residues 430–456 are disordered; that stretch reads MRQASRRSSPRVTNAAVQQDVDAVKKS. Residues 485–487 and Glu-538 each bind L-homocysteine; that span reads IGS. Residues 485-487 and Glu-538 contribute to the L-methionine site; that span reads IGS. 5-methyltetrahydropteroyltri-L-glutamate-binding positions include Asp-543, Tyr-566, 569–570, and Trp-615; that span reads RC. L-homocysteine is bound at residue Asp-653. Asp-653 is a binding site for L-methionine. Zn(2+) contacts are provided by His-695, Cys-697, His-706, Asp-710, and Glu-719. His-749 acts as the Proton donor in catalysis. Cys-781 lines the Zn(2+) pocket.

The protein belongs to the vitamin-B12 independent methionine synthase family. Zn(2+) is required as a cofactor. As to expression, expressed in seeds.

The protein localises to the plastid. It is found in the chloroplast. It catalyses the reaction 5-methyltetrahydropteroyltri-L-glutamate + L-homocysteine = tetrahydropteroyltri-L-glutamate + L-methionine. It functions in the pathway amino-acid biosynthesis; L-methionine biosynthesis via de novo pathway; L-methionine from L-homocysteine (MetE route): step 1/1. Its function is as follows. Catalyzes the transfer of a methyl group from 5-methyltetrahydrofolate to homocysteine resulting in methionine formation. The chain is 5-methyltetrahydropteroyltriglutamate--homocysteine methyltransferase 3, chloroplastic (MS3) from Arabidopsis thaliana (Mouse-ear cress).